Reading from the N-terminus, the 455-residue chain is Mu-like prophage FluMu DNA circularization protein (455 aa).

A DNA-binding region (H-T-H motif) is located at residues 368 to 387 (VILDNADAEQWTSYAALEQY).

It to phage Mu protein N.

In Haemophilus influenzae (strain ATCC 51907 / DSM 11121 / KW20 / Rd), this protein is Mu-like prophage FluMu DNA circularization protein.